The following is an 815-amino-acid chain: Phenylalanine--tRNA ligase beta subunit (815 aa).

In terms of domain architecture, tRNA-binding spans 39 to 148; it reads SKELQKFEVA…KDAVVGDNFT (110 aa). The B5 domain occupies 421–496; the sequence is PQKKPLDFSV…RIYGYDKIES (76 aa). Residues D474, D480, E483, and E484 each contribute to the Mg(2+) site. Residues 721-814 form the FDX-ACB domain; the sequence is SDYQANFRDY…ISQKFQGILR (94 aa).

This sequence belongs to the phenylalanyl-tRNA synthetase beta subunit family. Type 1 subfamily. As to quaternary structure, tetramer of two alpha and two beta subunits. Requires Mg(2+) as cofactor.

Its subcellular location is the cytoplasm. The enzyme catalyses tRNA(Phe) + L-phenylalanine + ATP = L-phenylalanyl-tRNA(Phe) + AMP + diphosphate + H(+). The polypeptide is Phenylalanine--tRNA ligase beta subunit (pheT) (Rickettsia prowazekii (strain Madrid E)).